The sequence spans 157 residues: 2-C-methyl-D-erythritol 2,4-cyclodiphosphate synthase (157 aa).

Positions 8 and 10 each coordinate a divalent metal cation. Residues Asp-8–His-10 and His-34–Ser-35 contribute to the 4-CDP-2-C-methyl-D-erythritol 2-phosphate site. His-42 is a binding site for a divalent metal cation. Residues Asp-56–Gly-58, Phe-61–Asp-65, Ala-100–Ala-106, Thr-132–Glu-135, Phe-139, and Arg-142 each bind 4-CDP-2-C-methyl-D-erythritol 2-phosphate.

The protein belongs to the IspF family. Homotrimer. It depends on a divalent metal cation as a cofactor.

It catalyses the reaction 4-CDP-2-C-methyl-D-erythritol 2-phosphate = 2-C-methyl-D-erythritol 2,4-cyclic diphosphate + CMP. It functions in the pathway isoprenoid biosynthesis; isopentenyl diphosphate biosynthesis via DXP pathway; isopentenyl diphosphate from 1-deoxy-D-xylulose 5-phosphate: step 4/6. Its function is as follows. Involved in the biosynthesis of isopentenyl diphosphate (IPP) and dimethylallyl diphosphate (DMAPP), two major building blocks of isoprenoid compounds. Catalyzes the conversion of 4-diphosphocytidyl-2-C-methyl-D-erythritol 2-phosphate (CDP-ME2P) to 2-C-methyl-D-erythritol 2,4-cyclodiphosphate (ME-CPP) with a corresponding release of cytidine 5-monophosphate (CMP). This Ectopseudomonas mendocina (strain ymp) (Pseudomonas mendocina) protein is 2-C-methyl-D-erythritol 2,4-cyclodiphosphate synthase.